Here is a 184-residue protein sequence, read N- to C-terminus: Large ribosomal subunit protein uL22B (184 aa).

A Glycyl lysine isopeptide (Lys-Gly) (interchain with G-Cter in ubiquitin) cross-link involves residue Lys46. At Thr70 the chain carries Phosphothreonine.

It belongs to the universal ribosomal protein uL22 family. Component of the large ribosomal subunit (LSU). Mature yeast ribosomes consist of a small (40S) and a large (60S) subunit. The 40S small subunit contains 1 molecule of ribosomal RNA (18S rRNA) and 33 different proteins (encoded by 57 genes). The large 60S subunit contains 3 rRNA molecules (25S, 5.8S and 5S rRNA) and 46 different proteins (encoded by 81 genes). uL22 is associated with the polypeptide exit tunnel.

It is found in the cytoplasm. Its function is as follows. Component of the ribosome, a large ribonucleoprotein complex responsible for the synthesis of proteins in the cell. The small ribosomal subunit (SSU) binds messenger RNAs (mRNAs) and translates the encoded message by selecting cognate aminoacyl-transfer RNA (tRNA) molecules. The large subunit (LSU) contains the ribosomal catalytic site termed the peptidyl transferase center (PTC), which catalyzes the formation of peptide bonds, thereby polymerizing the amino acids delivered by tRNAs into a polypeptide chain. The nascent polypeptides leave the ribosome through a tunnel in the LSU and interact with protein factors that function in enzymatic processing, targeting, and the membrane insertion of nascent chains at the exit of the ribosomal tunnel. This is Large ribosomal subunit protein uL22B from Saccharomyces cerevisiae (strain ATCC 204508 / S288c) (Baker's yeast).